We begin with the raw amino-acid sequence, 738 residues long: Polyribonucleotide nucleotidyltransferase (738 aa).

Residues D487 and D493 each coordinate Mg(2+). One can recognise a KH domain in the interval 554 to 613 (PKIVTMTINPDKIRDVIGPGGKMINSIIDQTGVKIDIEQDGTVFIASTDQEGIDLAMSMI). Residues 623–691 (GEVYDATVRR…DKGRVNASRK (69 aa)) form the S1 motif domain. Positions 704-738 (EAYEAKRKAARESRPPRDSRPPRRDGDRRPPRSTN) are disordered.

The protein belongs to the polyribonucleotide nucleotidyltransferase family. Mg(2+) serves as cofactor.

The protein resides in the cytoplasm. The catalysed reaction is RNA(n+1) + phosphate = RNA(n) + a ribonucleoside 5'-diphosphate. Involved in mRNA degradation. Catalyzes the phosphorolysis of single-stranded polyribonucleotides processively in the 3'- to 5'-direction. This is Polyribonucleotide nucleotidyltransferase from Exiguobacterium sp. (strain ATCC BAA-1283 / AT1b).